Here is a 213-residue protein sequence, read N- to C-terminus: Protein DMP3 (213 aa).

The interval 1–27 (MSSPSSLTQRNPTSSQEQSESVPQLRR) is disordered. Transmembrane regions (helical) follow at residues 45 to 65 (LANLLPTGTLLAFTLLIPVFT), 74 to 94 (TQVLTIVLLTLLSISCFLSSF), 136 to 156 (IRIIDWIHAVLSVLVFGAVAL), and 176 to 196 (VLDIVPMGVGVICGMLFLVFP).

It belongs to the plant DMP1 protein family. In terms of tissue distribution, expressed in leaves, siliques and roots (e.g. root hairs).

The protein localises to the endoplasmic reticulum membrane. Functionally, involved in membrane remodeling. The protein is Protein DMP3 of Arabidopsis thaliana (Mouse-ear cress).